A 961-amino-acid polypeptide reads, in one-letter code: DNA repair endonuclease XPF (961 aa).

3 disordered regions span residues 1–27, 451–485, and 674–693; these read MADS…SADT, NYAK…PPLA, and PTDE…QATK. The span at 13–22 shows a compositional bias: basic and acidic residues; it reads TENERPKEVE. A compositionally biased stretch (polar residues) spans 458–469; it reads TRSAPPKNVSSN. The ERCC4 domain maps to 697–777; sequence KVIVDMREFR…KPILLIEFDQ (81 aa).

The protein belongs to the XPF family. Heterodimer. Interacts with hdm.

It is found in the nucleus. Implicated in recombination events during meiosis, mostly in meiotic exchange. May directly resolve Holliday junctions within recombination intermediates leading to DNA exchange. Also required for the repair of mismatches within meiotic heteroduplex DNA and for nucleotide excision repair. The protein is DNA repair endonuclease XPF (mei-9) of Drosophila melanogaster (Fruit fly).